Here is a 405-residue protein sequence, read N- to C-terminus: Argininosuccinate synthase (405 aa).

ATP is bound by residues 11 to 19 and A38; that span reads AYSGGLDTS. 2 residues coordinate L-citrulline: Y91 and S96. Residue G121 coordinates ATP. The L-aspartate site is built by T123, N127, and D128. N127 is an L-citrulline binding site. L-citrulline-binding residues include R131, S182, S191, E267, and Y279.

Belongs to the argininosuccinate synthase family. Type 1 subfamily. In terms of assembly, homotetramer.

The protein resides in the cytoplasm. The enzyme catalyses L-citrulline + L-aspartate + ATP = 2-(N(omega)-L-arginino)succinate + AMP + diphosphate + H(+). The protein operates within amino-acid biosynthesis; L-arginine biosynthesis; L-arginine from L-ornithine and carbamoyl phosphate: step 2/3. The chain is Argininosuccinate synthase from Sphingopyxis alaskensis (strain DSM 13593 / LMG 18877 / RB2256) (Sphingomonas alaskensis).